The primary structure comprises 411 residues: Z-DNA-binding protein 1 (411 aa).

Z-binding domains lie at 8 to 70 (LSTG…SIGG) and 84 to 148 (SSAQ…HSRQ). Residues Lys-17 and Lys-43 each participate in a glycyl lysine isopeptide (Lys-Gly) (interchain with G-Cter in ubiquitin) cross-link. Residues 60-86 (SPEPATWSIGGAASGDGAPAIPENSSA) form a disordered region. 2 short sequence motifs (RIP homotypic interaction motif (RHIM)) span residues 188-205 (NSNA…REKA) and 237-261 (YIYM…LVGD). Disordered regions lie at residues 263 to 303 (GKHP…EGDT) and 332 to 411 (KGEV…LSKQ). 3 stretches are compositionally biased toward polar residues: residues 268–292 (YSFS…NMQT), 350–371 (GTSS…SMLP), and 400–411 (IESSQDTGLSKQ).

As to quaternary structure, homodimer. Interacts (via RIP homotypic interaction motif) with RIPK3; leading to RIPK3 activation and necroptosis; interaction is enhanced by CASP6. Interacts (via RIP homotypic interaction motif) with RIPK1. Component of the AIM2 PANoptosome complex, a multiprotein complex that drives inflammatory cell death (PANoptosis). In terms of assembly, (Microbial infection) Interacts (via RIP homotypic interaction motif) with murid herpesvirus protein RIR1 (via RIP homotypic interaction motif); leading to inhibition of ZBP1-dependent necroptosis. (Microbial infection) Interacts with vaccinia virus E3 protein; leading to inhibit ZBP1-dependent necroptosis. In terms of processing, ubiquitinated; polyubiquitinated following influenza A virus (IAV) infection. Phosphorylated. Expressed in lung, spleen and liver. Lower levels were seen in heart, kidney and testis. Expression is greatly up-regulated in tumor stromal cells and activated macrophages.

Its subcellular location is the cytoplasm. The protein resides in the nucleus. With respect to regulation, ZBP1-dependent necroptosis is normally inhibited by RIPK1: RIPK1 inhibits the ZBP1-induced activation of RIPK3 via FADD-mediated recruitment of CASP8, which cleaves RIPK1 and limits TNF-induced necroptosis. Key innate sensor that recognizes and binds Z-RNA structures, which are produced by a number of viruses, such as herpesvirus, orthomyxovirus or flavivirus, and triggers different forms of cell death. ZBP1 acts as an essential mediator of pyroptosis, necroptosis and apoptosis (PANoptosis), an integral part of host defense against pathogens, by activating RIPK3, caspase-8 (CASP8), and the NLRP3 inflammasome. Key activator of necroptosis, a programmed cell death process in response to death-inducing TNF-alpha family members, via its ability to bind Z-RNA: once activated upon Z-RNA-binding, ZBP1 interacts and stimulates RIPK3 kinase, which phosphorylates and activates MLKL, triggering execution of programmed necrosis. In addition to TNF-induced necroptosis, necroptosis can also take place in the nucleus in response to orthomyxoviruses infection: ZBP1 recognizes and binds Z-RNA structures that are produced in infected nuclei by orthomyxoviruses, such as the influenza A virus (IAV), leading to ZBP1 activation, RIPK3 stimulation and subsequent MLKL phosphorylation, triggering disruption of the nuclear envelope and leakage of cellular DNA into the cytosol. ZBP1-dependent cell death in response to IAV infection promotes interleukin-1 alpha (IL1A) induction in an NLRP3-inflammasome-independent manner: IL1A expression is required for the optimal interleukin-1 beta (IL1B) production, and together, these cytokines promote infiltration of inflammatory neutrophils to the lung, leading to the formation of neutrophil extracellular traps. In addition to its direct role in driving necroptosis via its ability to sense Z-RNAs, also involved in PANoptosis triggered in response to bacterial infection: component of the AIM2 PANoptosome complex, a multiprotein complex that triggers PANoptosis. Also acts as the apical sensor of fungal infection responsible for activating PANoptosis. Involved in CASP8-mediated cell death via its interaction with RIPK1 but independently of its ability to sense Z-RNAs. In some cell types, also able to restrict viral replication by promoting cell death-independent responses. In response to flavivirus infection in neurons, promotes a cell death-independent pathway that restricts viral replication: together with RIPK3, promotes a death-independent transcriptional program that modifies the cellular metabolism via up-regulation expression of the enzyme ACOD1/IRG1 and production of the metabolite itaconate. Itaconate inhibits the activity of succinate dehydrogenase, generating a metabolic state in neurons that suppresses replication of viral genomes. The protein is Z-DNA-binding protein 1 of Mus musculus (Mouse).